Here is a 268-residue protein sequence, read N- to C-terminus: 4-diphosphocytidyl-2-C-methyl-D-erythritol kinase (268 aa).

Lys-9 is a catalytic residue. 88–98 (PPGAGLGGGSS) is a binding site for ATP. Asp-130 is an active-site residue.

This sequence belongs to the GHMP kinase family. IspE subfamily.

The enzyme catalyses 4-CDP-2-C-methyl-D-erythritol + ATP = 4-CDP-2-C-methyl-D-erythritol 2-phosphate + ADP + H(+). The protein operates within isoprenoid biosynthesis; isopentenyl diphosphate biosynthesis via DXP pathway; isopentenyl diphosphate from 1-deoxy-D-xylulose 5-phosphate: step 3/6. Catalyzes the phosphorylation of the position 2 hydroxy group of 4-diphosphocytidyl-2C-methyl-D-erythritol. In Aquifex aeolicus (strain VF5), this protein is 4-diphosphocytidyl-2-C-methyl-D-erythritol kinase.